Here is a 168-residue protein sequence, read N- to C-terminus: Phosphopantetheine adenylyltransferase (168 aa).

Substrate is bound at residue threonine 14. ATP is bound by residues 14-15 (TF) and histidine 22. Lysine 46, leucine 78, and arginine 92 together coordinate substrate. ATP-binding positions include 93–95 (GLR), glutamate 103, and 128–134 (YSFISSS).

It belongs to the bacterial CoaD family. Homohexamer. Mg(2+) serves as cofactor.

The protein resides in the cytoplasm. It carries out the reaction (R)-4'-phosphopantetheine + ATP + H(+) = 3'-dephospho-CoA + diphosphate. The protein operates within cofactor biosynthesis; coenzyme A biosynthesis; CoA from (R)-pantothenate: step 4/5. Reversibly transfers an adenylyl group from ATP to 4'-phosphopantetheine, yielding dephospho-CoA (dPCoA) and pyrophosphate. This Xanthomonas campestris pv. campestris (strain B100) protein is Phosphopantetheine adenylyltransferase.